We begin with the raw amino-acid sequence, 126 residues long: Small ribosomal subunit protein uS13c (126 aa).

Positions 97-126 (PLRGQRTRTNARTRRGGKKTVAGKKKAPRK) are disordered. Positions 101–126 (QRTRTNARTRRGGKKTVAGKKKAPRK) are enriched in basic residues.

This sequence belongs to the universal ribosomal protein uS13 family. In terms of assembly, part of the 30S ribosomal subunit.

It localises to the plastid. The protein localises to the chloroplast. Its function is as follows. Located at the top of the head of the 30S subunit, it contacts several helices of the 16S rRNA. The chain is Small ribosomal subunit protein uS13c from Pyropia yezoensis (Susabi-nori).